A 403-amino-acid polypeptide reads, in one-letter code: Enoyl-[acyl-carrier-protein] reductase [NADH] (403 aa).

NAD(+)-binding positions include 49–54 (GASSGY), 75–76 (FE), 112–113 (DA), and 141–142 (LA). Tyr-227 contributes to the substrate binding site. Tyr-237 (proton donor) is an active-site residue. NAD(+)-binding positions include Lys-246 and 276–278 (VVT).

This sequence belongs to the TER reductase family. As to quaternary structure, monomer.

The catalysed reaction is a 2,3-saturated acyl-[ACP] + NAD(+) = a (2E)-enoyl-[ACP] + NADH + H(+). The protein operates within lipid metabolism; fatty acid biosynthesis. Involved in the final reduction of the elongation cycle of fatty acid synthesis (FAS II). Catalyzes the reduction of a carbon-carbon double bond in an enoyl moiety that is covalently linked to an acyl carrier protein (ACP). This Pseudomonas putida (strain GB-1) protein is Enoyl-[acyl-carrier-protein] reductase [NADH].